Consider the following 249-residue polypeptide: 5'-nucleotidase SurE (249 aa).

Aspartate 9, aspartate 10, serine 40, and asparagine 92 together coordinate a divalent metal cation.

It belongs to the SurE nucleotidase family. A divalent metal cation is required as a cofactor.

It is found in the cytoplasm. It catalyses the reaction a ribonucleoside 5'-phosphate + H2O = a ribonucleoside + phosphate. In terms of biological role, nucleotidase that shows phosphatase activity on nucleoside 5'-monophosphates. This chain is 5'-nucleotidase SurE, found in Shewanella oneidensis (strain ATCC 700550 / JCM 31522 / CIP 106686 / LMG 19005 / NCIMB 14063 / MR-1).